The chain runs to 240 residues: MKVKKGGGGTGSGAEPVPGASNRSAEPTREPGAEAESGSESEPEPGPGPRLGPLQGKQPIGPEDVLGLQRITGDYLCSPEENIYKIDFVRFKIRDMDSGTVLFEIKKPPVSERLPINRRDLDPNAGRFVRYQFTPAFLRLRQVGATVEFTVGDKPVNNFRMIERHYFRNQLLKSFDFHFGFCIPSSKNTCEHIYDFPPLSEELISEMIRHPYETQSDSFYFVDDRLVMHNKADYSYSGTP.

Residues 1-12 (MKVKKGGGGTGS) show a composition bias toward gly residues. The interval 1–62 (MKVKKGGGGT…PLQGKQPIGP (62 aa)) is disordered. Phosphoserine; by CK2 is present on residues serine 37, serine 39, and serine 41. Tyrosine 131 is a tetradecanoate binding site.

Belongs to the PDE6D/unc-119 family. May interact with GTP-bound ARL1. Interacts with ARL2 and ARL3 (GTP-bound forms); this promotes the release of myristoylated cargo proteins. Found in a complex with ARL3, RP2 and UNC119; RP2 induces hydrolysis of GTP ARL3 in the complex, leading to the release of UNC119. Interacts with NPHP3 (when myristoylated). Interacts with CYS1 (when myristoylated). Interacts with MACIR; interaction only takes place when UNC119 is not liganded with myristoylated proteins. Interacts with CABP4; in the absence of calcium. Interacts with DNM1; leading to a decrease of DNM1 GTPase activity. Interacts with LCK; this interaction plays a crucial role in activation of LCK. Interacts with FYN. Interacts with RAB11A; in a cell cycle-dependent manner. Interacts with LYN (via SH2 and SH3 domains); leading to LYN activation. Found in a complex with ABL1, ABL2, CRK and UNC119; leading to the inhibition of CRK phosphorylation by ABL kinases. Interacts with CD44. Interacts with KLHL18 (via kelch repeats). Interacts with PPP3CA, PPP3CB and PPP3CC. Interacts with USP48; this interaction promotes UNC119 stability. Phosphorylation suppresses its interaction with KLHL18 and down-regulates its KLHL18-mediated degradation. Phosphorylated more under light conditions than dark conditions. Dephosphorylated by calcineurin. As to expression, localized in photoreceptor synapses in the outer plexiform layer of the retina.

It localises to the cytoplasm. It is found in the cytoskeleton. The protein localises to the microtubule organizing center. The protein resides in the centrosome. Its subcellular location is the spindle. It localises to the spindle pole. Its function is as follows. Involved in synaptic functions in photoreceptor cells, the signal transduction in immune cells as a Src family kinase activator, endosome recycling, the uptake of bacteria and endocytosis, protein trafficking in sensory neurons and as lipid-binding chaperone with specificity for a diverse subset of myristoylated proteins. Specifically binds the myristoyl moiety of a subset of N-terminally myristoylated proteins and is required for their localization. Binds myristoylated GNAT1 and is required for G-protein localization and trafficking in sensory neurons. Probably plays a role in trafficking proteins in photoreceptor cells. Plays important roles in mediating Src family kinase signals for the completion of cytokinesis via RAB11A. The polypeptide is Protein unc-119 homolog A (Unc119) (Mus musculus (Mouse)).